The primary structure comprises 429 residues: 4-hydroxyphenylacetate degradation bifunctional isomerase/decarboxylase (429 aa).

Approximate repeat units lie at residues 1–215 (MKGT…NQTF) and 216–429 (TWPL…ESAN). Residues Glu-276, Glu-278, and Asp-307 each contribute to the a divalent metal cation site.

It belongs to the FAH family. Monomer. The cofactor is Mg(2+).

It catalyses the reaction (2E,4Z)-5-hydroxypenta-2,4-diene-1,2,5-tricarboxylate = (3E,5R)-5-carboxy-2-oxohept-3-enedioate. The enzyme catalyses (3E,5R)-5-carboxy-2-oxohept-3-enedioate + H(+) = (4Z)-2-oxohept-4-enedioate + CO2. Its pathway is aromatic compound metabolism; 4-hydroxyphenylacetate degradation; pyruvate and succinate semialdehyde from 4-hydroxyphenylacetate: step 4/7. It participates in aromatic compound metabolism; 4-hydroxyphenylacetate degradation; pyruvate and succinate semialdehyde from 4-hydroxyphenylacetate: step 5/7. Its function is as follows. Decarboxylates OPET (5-oxo-pent-3-ene-1,2,5-tricarboxylic acid) into HHDD (2-hydroxy-hept-2,4-diene-1,7-dioate) and isomerizes it to OHED (2-oxo-hept-3-ene-1,7-dioate). The sequence is that of 4-hydroxyphenylacetate degradation bifunctional isomerase/decarboxylase (hpaG) from Salmonella dublin.